The sequence spans 240 residues: MORN repeat-containing protein 3 (240 aa).

The interval 6–35 is interaction with MDM2; that stretch reads CPKKSESLWKGWDRKAQKNGLRRQVYAVNG. 7 MORN repeats span residues 38-60, 62-84, 91-113, 114-136, 137-159, 160-182, and 184-205; these read YVGE…KNGA, YEGD…DQQT, YSGW…PKEY, YEGE…NGDI, YEGQ…NGNR, YEGC…DHGQ, and FEGF…GRDE. An interaction with SIRT1 region spans residues 76 to 100; it reads TLSLPDQQTGKCRRVYSGWWKGDKK. Positions 206-240 are interaction with TP53; the sequence is APEPTQFPIPEVKILDPDGVLAQALAMFKKTEEGD.

Interacts with MEIG1. Interacts with TP53, MDM2 and SIRT1; the interactions mediate post-transcriptional modifications of TP53 by MDM2 and SIRT1.

It localises to the cytoplasmic vesicle. The protein resides in the secretory vesicle. Its subcellular location is the acrosome. Its function is as follows. Assembles a suppression complex (suppresome) by tethering SIRT1 and MDM2 to regulate composite modifications of p53/TP53. Confers both deacetylation-mediated functional inactivation, by SIRT1, and ubiquitination-dependent degradation, by MDM2, of p53/TP53, promoting a proliferative and cell survival behaviors. May play a role in the regulation of spermatogenesis. The sequence is that of MORN repeat-containing protein 3 (MORN3) from Macaca fascicularis (Crab-eating macaque).